The primary structure comprises 107 residues: Large ribosomal subunit protein P2 (107 aa).

Positions serine 63–proline 83 are enriched in low complexity. The tract at residues serine 63–aspartate 107 is disordered. Over residues lysine 84–proline 93 the composition is skewed to basic and acidic residues.

The protein belongs to the eukaryotic ribosomal protein P1/P2 family. P1 and P2 exist as dimers at the large ribosomal subunit. Phosphorylated.

Its function is as follows. Plays an important role in the elongation step of protein synthesis. This is Large ribosomal subunit protein P2 from Caenorhabditis elegans.